The following is a 109-amino-acid chain: Cell division protein ZapA (109 aa).

The stretch at 21–99 forms a coiled coil; sequence PEQLDALNQA…IEQALLEQGR (79 aa).

The protein belongs to the ZapA family. Type 1 subfamily. As to quaternary structure, homodimer. Interacts with FtsZ.

The protein resides in the cytoplasm. In terms of biological role, activator of cell division through the inhibition of FtsZ GTPase activity, therefore promoting FtsZ assembly into bundles of protofilaments necessary for the formation of the division Z ring. It is recruited early at mid-cell but it is not essential for cell division. In Edwardsiella ictaluri (strain 93-146), this protein is Cell division protein ZapA.